The chain runs to 285 residues: MKVAADPDPSLVSQRDMEPEAAKDKDSFRNYTSGPLLDRVFATYKLMHTWQTVDFVRRKHAQFGGFSYKRMTVMEAVDMLDGLVDESDPDVDFPNSFHAFQTAEGIRKAHPDKDWFHLVGLLHDLGKVLALAGEPQWAVVGDTFPVGCRPQASVVFRDCTFQDNPDLQDPLYSTELGMYQPHCGLENVLMSWGHDEYMYRMMKFNKFALPPEAFYIIRFHSFYPWHKFGDYQQLCNEQDLAMLPWVQEFNKFDLYTKSSSLPDVAALRPYYQGLVDKYCPGILCW.

Positions 1-28 (MKVAADPDPSLVSQRDMEPEAAKDKDSF) are disordered. Over residues 15–28 (RDMEPEAAKDKDSF) the composition is skewed to basic and acidic residues. Arg29 contacts substrate. Phosphoserine is present on Ser33. Residue 85–87 (DES) participates in substrate binding. The Fe cation site is built by His98, His123, and Asp124. Residues Lys127 and 141–142 (GD) each bind substrate. Fe cation contacts are provided by His194, His220, and Asp253. 220–221 (HS) contacts substrate.

It belongs to the myo-inositol oxygenase family. Fe cation serves as cofactor.

It is found in the cytoplasm. It carries out the reaction myo-inositol + O2 = D-glucuronate + H2O + H(+). The protein operates within polyol metabolism; myo-inositol degradation into D-glucuronate; D-glucuronate from myo-inositol: step 1/1. The sequence is that of Inositol oxygenase (MIOX) from Bos taurus (Bovine).